A 643-amino-acid polypeptide reads, in one-letter code: MAENKKYDESAIQVLEGLEAVRKRPGMYIGSTDNKGLHHLVWEIVDNAIDEALAGYCTQIDVILEKDNSITVIDNGRGIPTGMHKTGKPTPEVIFSVLHAGGKFDSTAYKSSGGLHGVGSSVTNALSKRFKAIIYRDKKIHEIEFKNGGKLEKPLTFINTTYKTGTTINFLPDDTIFSNAKFNFSLISERLKESALLNSGLKITLSDLISNRYVEYQFQDGLVEFVKELVDDKTPVTDIITINNESKNIIVEIALQYTEDDNEIILGFANNVKTIDGGTHLVGFKSGLIRAINDYAKDQKILKDKTKLDSNDLREGLVAIVTVKIPENLIEYEGQTKSKLGTSDAKTVVEQIVYEFMSYWLIENKVLANKVIENALNAQKARIAAKQARQAIKSVKGKKNVNKLMLGKLTPAQGKKRELNELYLVEGDSAGGSAKSGRDRNFQAILPLRGKVINSEKAKLVDLLKNEEIQSIINAIGAGVGKDFDISDINYGKIIIMTDADTDGAHIQTLLLTFFYRHMKDLIIHKKVYIALPPLYKITFNDKSFIYLWDEEELNKFNKTNTKKYEIQRYKGLGEMNADQLWQTTMDPKNRKIIQVTISDGLLAERMFKTLMGDDVEKRKLWIQENVKFTLEDDQIQIIEMEK.

Residues 420-534 enclose the Toprim domain; it reads NELYLVEGDS…HKKVYIALPP (115 aa). Residues Glu426, Asp499, and Asp501 each contribute to the Mg(2+) site.

It belongs to the type II topoisomerase family. ParE type 2 subfamily. Heterotetramer composed of ParC and ParE. Mg(2+) is required as a cofactor. Requires Mn(2+) as cofactor. It depends on Ca(2+) as a cofactor.

It is found in the cytoplasm. It catalyses the reaction ATP-dependent breakage, passage and rejoining of double-stranded DNA.. In terms of biological role, topoisomerase IV is essential for chromosome segregation. It relaxes supercoiled DNA. Performs the decatenation events required during the replication of a circular DNA molecule. This is DNA topoisomerase 4 subunit B (parE) from Mycoplasma capricolum subsp. capricolum (strain California kid / ATCC 27343 / NCTC 10154).